The sequence spans 465 residues: Cruciferin CRU4 (465 aa).

The signal sequence occupies residues 1-22; sequence MGPTSLLSFFFTFLTLFHGFTA. 2 cysteine pairs are disulfide-bonded: Cys-29/Cys-62 and Cys-105/Cys-283. Cupin type-1 domains follow at residues 34–236 and 289–438; these read LNAL…ETAQ and ENLD…QEAR. Phosphothreonine is present on Thr-108. The interval 112 to 135 is disordered; it reads SPVFGQGQGQEQGQGQGQGQGQGF. Residues 117-133 are compositionally biased toward gly residues; sequence QGQGQEQGQGQGQGQGQ. The residue at position 306 (Tyr-306) is a Phosphotyrosine. 2 positions are modified to phosphoserine: Ser-308 and Ser-443.

This sequence belongs to the 11S seed storage protein (globulins) family. Heterohexamer; each subunit is composed of an acidic and a basic chain derived from a single precursor and linked by a disulfide bond.

It is found in the rough endoplasmic reticulum. Its function is as follows. This is a seed storage protein. The polypeptide is Cruciferin CRU4 (CRU4) (Brassica napus (Rape)).